The primary structure comprises 199 residues: Acireductone dioxygenase 3 (199 aa).

His-99, His-101, Glu-105, and His-144 together coordinate Fe(2+). His-99, His-101, Glu-105, and His-144 together coordinate Ni(2+).

This sequence belongs to the acireductone dioxygenase (ARD) family. Fe(2+) is required as a cofactor. The cofactor is Ni(2+).

Its subcellular location is the cytoplasm. The protein resides in the nucleus. It catalyses the reaction 1,2-dihydroxy-5-(methylsulfanyl)pent-1-en-3-one + O2 = 4-methylsulfanyl-2-oxobutanoate + formate + 2 H(+). The catalysed reaction is 1,2-dihydroxy-5-(methylsulfanyl)pent-1-en-3-one + O2 = 3-(methylsulfanyl)propanoate + CO + formate + 2 H(+). The protein operates within amino-acid biosynthesis; L-methionine biosynthesis via salvage pathway; L-methionine from S-methyl-5-thio-alpha-D-ribose 1-phosphate: step 5/6. Functionally, catalyzes 2 different reactions between oxygen and the acireductone 1,2-dihydroxy-3-keto-5-methylthiopentene (DHK-MTPene) depending upon the metal bound in the active site. Fe-containing acireductone dioxygenase (Fe-ARD) produces formate and 2-keto-4-methylthiobutyrate (KMTB), the alpha-ketoacid precursor of methionine in the methionine recycle pathway. Ni-containing acireductone dioxygenase (Ni-ARD) produces methylthiopropionate, carbon monoxide and formate, and does not lie on the methionine recycle pathway. The sequence is that of Acireductone dioxygenase 3 (ARD3) from Arabidopsis thaliana (Mouse-ear cress).